Reading from the N-terminus, the 140-residue chain is Ribosome-binding factor A (140 aa).

Residues 121 to 140 (KAAEHGREDEELDDTEQDDK) form a disordered region. The segment covering 129-140 (DEELDDTEQDDK) has biased composition (acidic residues).

Belongs to the RbfA family. In terms of assembly, monomer. Binds 30S ribosomal subunits, but not 50S ribosomal subunits or 70S ribosomes.

The protein localises to the cytoplasm. Its function is as follows. One of several proteins that assist in the late maturation steps of the functional core of the 30S ribosomal subunit. Associates with free 30S ribosomal subunits (but not with 30S subunits that are part of 70S ribosomes or polysomes). Required for efficient processing of 16S rRNA. May interact with the 5'-terminal helix region of 16S rRNA. This chain is Ribosome-binding factor A, found in Shewanella loihica (strain ATCC BAA-1088 / PV-4).